The chain runs to 188 residues: Elongation factor P (188 aa).

Belongs to the elongation factor P family.

The protein resides in the cytoplasm. The protein operates within protein biosynthesis; polypeptide chain elongation. Involved in peptide bond synthesis. Stimulates efficient translation and peptide-bond synthesis on native or reconstituted 70S ribosomes in vitro. Probably functions indirectly by altering the affinity of the ribosome for aminoacyl-tRNA, thus increasing their reactivity as acceptors for peptidyl transferase. This Rickettsia conorii (strain ATCC VR-613 / Malish 7) protein is Elongation factor P (efp).